Reading from the N-terminus, the 294-residue chain is Cytidine deaminase (294 aa).

2 consecutive CMP/dCMP-type deaminase domains span residues 48–168 (DEDA…FGPK) and 186–294 (LTGD…VLLG). 89-91 (NME) is a substrate binding site. Residue H102 participates in Zn(2+) binding. Residue E104 is the Proton donor of the active site. Zn(2+)-binding residues include C129 and C132.

This sequence belongs to the cytidine and deoxycytidylate deaminase family. In terms of assembly, homodimer. Zn(2+) is required as a cofactor.

It carries out the reaction cytidine + H2O + H(+) = uridine + NH4(+). The catalysed reaction is 2'-deoxycytidine + H2O + H(+) = 2'-deoxyuridine + NH4(+). This enzyme scavenges exogenous and endogenous cytidine and 2'-deoxycytidine for UMP synthesis. The chain is Cytidine deaminase from Salmonella dublin (strain CT_02021853).